The following is a 522-amino-acid chain: Sulfite reductase [NADPH] flavoprotein alpha-component (522 aa).

The Flavodoxin-like domain occupies 60–198; it reads ITILFGSQTG…DTERWSSDAL (139 aa). The disordered stretch occupies residues 217–242; it reads TLRSHQDLRSHQEQSRNRARPYDKDN. Residues 220–242 show a composition bias toward basic and acidic residues; sequence SHQDLRSHQEQSRNRARPYDKDN. The region spanning 241–399 is the FAD-binding FR-type domain; sequence DNPYTATLLE…VAPYRAFLQQ (159 aa).

Alpha(8)-beta(8). The alpha component is a flavoprotein, the beta component is a hemoprotein. FAD is required as a cofactor. The cofactor is FMN.

It catalyses the reaction hydrogen sulfide + 3 NADP(+) + 3 H2O = sulfite + 3 NADPH + 4 H(+). Its function is as follows. Catalyzes the 6-electron reduction of sulfite to sulfide. This is one of several activities required for the biosynthesis of L-cysteine from sulfate. The flavo-protein component catalyzes the electron flow from NADPH -&gt; FAD -&gt; FMN to the hemoprotein component. This Thiocapsa roseopersicina protein is Sulfite reductase [NADPH] flavoprotein alpha-component (cysJ).